A 93-amino-acid polypeptide reads, in one-letter code: Small ribosomal subunit protein uS19 (93 aa).

The protein belongs to the universal ribosomal protein uS19 family.

Functionally, protein S19 forms a complex with S13 that binds strongly to the 16S ribosomal RNA. This Paenarthrobacter aurescens (strain TC1) protein is Small ribosomal subunit protein uS19.